A 1036-amino-acid polypeptide reads, in one-letter code: Serine/threonine-protein kinase ULK2 (1036 aa).

The region spanning 9–271 (YSKRDLVGHG…FEAFFSHPFL (263 aa)) is the Protein kinase domain. Residues 15-23 (VGHGAFAVV) and Lys39 each bind ATP. Asp131 functions as the Proton acceptor in the catalytic mechanism. 5 disordered regions span residues 319 to 348 (ENLS…NSSC), 418 to 460 (TSTA…ADTA), 491 to 522 (CCCG…SLLS), 540 to 588 (QKLR…SSDW), and 656 to 695 (AEQQ…LNTE). Positions 335–348 (SKDSASTSSKNSSC) are enriched in low complexity. Residues 418-428 (TSTASSGTNVH) are compositionally biased toward polar residues. Position 430 is a phosphoserine (Ser430). Residues 504–521 (RNSSGSPVPQAQSPQSLL) are compositionally biased toward polar residues. Over residues 659–679 (QSKAVFGRSVSTGKLSDQQGK) the composition is skewed to polar residues. 2 positions are modified to phosphoserine: Ser771 and Ser780. The CTD-like region stretch occupies residues 812-1036 (ELPEETLMER…SALCHSTATV (225 aa)).

This sequence belongs to the protein kinase superfamily. Ser/Thr protein kinase family. APG1/unc-51/ULK1 subfamily. As to quaternary structure, interacts with SYNGAP1. Component of a complex consisting of ATG13/KIAA0652, ULK1 and RB1CC1/FIP200. Interacts (via C-terminus) with ATG13/KIAA0652. Associates with the mammalian target of rapamycin complex 1 (mTORC1) through an interaction with RPTOR. In terms of processing, autophosphorylated. In response to nutrient limitation, probably phosphorylated and activated by AMPK, leading to activate autophagy.

The protein localises to the cytoplasmic vesicle membrane. It carries out the reaction L-seryl-[protein] + ATP = O-phospho-L-seryl-[protein] + ADP + H(+). The enzyme catalyses L-threonyl-[protein] + ATP = O-phospho-L-threonyl-[protein] + ADP + H(+). Serine/threonine-protein kinase involved in autophagy in response to starvation. Acts upstream of phosphatidylinositol 3-kinase PIK3C3 to regulate the formation of autophagophores, the precursors of autophagosomes. Part of regulatory feedback loops in autophagy: acts both as a downstream effector and a negative regulator of mammalian target of rapamycin complex 1 (mTORC1) via interaction with RPTOR. Activated via phosphorylation by AMPK, also acts as a negative regulator of AMPK through phosphorylation of the AMPK subunits PRKAA1, PRKAB2 and PRKAG1. May phosphorylate ATG13/KIAA0652, FRS2, FRS3 and RPTOR; however such data need additional evidences. Not involved in ammonia-induced autophagy or in autophagic response of cerebellar granule neurons (CGN) to low potassium concentration. Plays a role early in neuronal differentiation and is required for granule cell axon formation: may govern axon formation via Ras-like GTPase signaling and through regulation of the Rab5-mediated endocytic pathways within developing axons. The chain is Serine/threonine-protein kinase ULK2 (ULK2) from Homo sapiens (Human).